Here is an 863-residue protein sequence, read N- to C-terminus: Leucine--tRNA ligase (863 aa).

The 'HIGH' region motif lies at 42-52 (PYPSGKLHMGH). The 'KMSKS' region motif lies at 623–627 (KMSKS). Lys-626 provides a ligand contact to ATP.

The protein belongs to the class-I aminoacyl-tRNA synthetase family.

The protein resides in the cytoplasm. It carries out the reaction tRNA(Leu) + L-leucine + ATP = L-leucyl-tRNA(Leu) + AMP + diphosphate. The chain is Leucine--tRNA ligase from Paraburkholderia xenovorans (strain LB400).